The following is a 598-amino-acid chain: uncharacterized protein (598 aa).

The ABC transmembrane type-1 domain maps to 39–322 (LIMVFVFVTV…LSNQFNMIQM (284 aa)). The next 5 membrane-spanning stretches (helical) occupy residues 40-60 (IMVF…PYLI), 80-100 (MLIL…QGKI), 150-170 (VLGN…GAVI), 177-197 (VILS…TQIV), and 273-293 (LGFA…IITV). Residues 355-589 (IEFKNVWFSY…RGFYYELFTS (235 aa)) enclose the ABC transporter domain. 388–395 (GPTGSGKT) contributes to the ATP binding site.

The protein belongs to the ABC transporter superfamily.

Its subcellular location is the cell membrane. This is an uncharacterized protein from Thermotoga maritima (strain ATCC 43589 / DSM 3109 / JCM 10099 / NBRC 100826 / MSB8).